We begin with the raw amino-acid sequence, 455 residues long: Bifunctional protein GlmU (455 aa).

The tract at residues 1 to 227 is pyrophosphorylase; the sequence is MGLSVIILAA…CEEVQGVNDR (227 aa). UDP-N-acetyl-alpha-D-glucosamine contacts are provided by residues 8 to 11, K22, Q73, 78 to 79, 100 to 102, G137, E152, N167, and N225; these read LAAG, GT, and YGD. Mg(2+) is bound at residue D102. Residue N225 participates in Mg(2+) binding. The segment at 228-248 is linker; sequence WELTKLERYYQRLMAKKLSLA. The tract at residues 249 to 455 is N-acetyltransferase; that stretch reads GVTIIDPERF…KGWHRPTKKE (207 aa). 2 residues coordinate UDP-N-acetyl-alpha-D-glucosamine: R332 and K350. H362 functions as the Proton acceptor in the catalytic mechanism. 2 residues coordinate UDP-N-acetyl-alpha-D-glucosamine: Y365 and N376. Acetyl-CoA is bound by residues A379, 385–386, S404, A422, and R439; that span reads NY.

In the N-terminal section; belongs to the N-acetylglucosamine-1-phosphate uridyltransferase family. The protein in the C-terminal section; belongs to the transferase hexapeptide repeat family. As to quaternary structure, homotrimer. Mg(2+) serves as cofactor.

The protein localises to the cytoplasm. It carries out the reaction alpha-D-glucosamine 1-phosphate + acetyl-CoA = N-acetyl-alpha-D-glucosamine 1-phosphate + CoA + H(+). It catalyses the reaction N-acetyl-alpha-D-glucosamine 1-phosphate + UTP + H(+) = UDP-N-acetyl-alpha-D-glucosamine + diphosphate. It functions in the pathway nucleotide-sugar biosynthesis; UDP-N-acetyl-alpha-D-glucosamine biosynthesis; N-acetyl-alpha-D-glucosamine 1-phosphate from alpha-D-glucosamine 6-phosphate (route II): step 2/2. The protein operates within nucleotide-sugar biosynthesis; UDP-N-acetyl-alpha-D-glucosamine biosynthesis; UDP-N-acetyl-alpha-D-glucosamine from N-acetyl-alpha-D-glucosamine 1-phosphate: step 1/1. It participates in bacterial outer membrane biogenesis; LPS lipid A biosynthesis. In terms of biological role, catalyzes the last two sequential reactions in the de novo biosynthetic pathway for UDP-N-acetylglucosamine (UDP-GlcNAc). The C-terminal domain catalyzes the transfer of acetyl group from acetyl coenzyme A to glucosamine-1-phosphate (GlcN-1-P) to produce N-acetylglucosamine-1-phosphate (GlcNAc-1-P), which is converted into UDP-GlcNAc by the transfer of uridine 5-monophosphate (from uridine 5-triphosphate), a reaction catalyzed by the N-terminal domain. The polypeptide is Bifunctional protein GlmU (Coxiella burnetii (strain CbuG_Q212) (Coxiella burnetii (strain Q212))).